A 76-amino-acid chain; its full sequence is Exodeoxyribonuclease 7 small subunit (76 aa).

This sequence belongs to the XseB family. In terms of assembly, heterooligomer composed of large and small subunits.

It is found in the cytoplasm. The enzyme catalyses Exonucleolytic cleavage in either 5'- to 3'- or 3'- to 5'-direction to yield nucleoside 5'-phosphates.. In terms of biological role, bidirectionally degrades single-stranded DNA into large acid-insoluble oligonucleotides, which are then degraded further into small acid-soluble oligonucleotides. In Bacillus cytotoxicus (strain DSM 22905 / CIP 110041 / 391-98 / NVH 391-98), this protein is Exodeoxyribonuclease 7 small subunit.